A 386-amino-acid polypeptide reads, in one-letter code: Palmitoyltransferase ZDHHC9 (386 aa).

Residues 1–35 are Cytoplasmic-facing; it reads MSAVMITRKITRKWEKLPGKNTFCCDGRVMMARQK. The chain crosses the membrane as a helical span at residues 36–56; the sequence is GVFYLTLFLIVGTCSLFFAFE. The Lumenal portion of the chain corresponds to 57–63; that stretch reads CPYLAVH. Residues 64–84 form a helical membrane-spanning segment; that stretch reads LSPAIPVFAVLLFVFVMAMLL. At 85 to 183 the chain is on the cytoplasmic side; sequence RTSFSDPGVL…NCVGKRNYRY (99 aa). In terms of domain architecture, DHHC spans 139–189; sequence KYCYTCKIFRPPRASHCSICDNCVDRFDHHCPWVGNCVGKRNYRYFYLFTL. Residue Cys-169 is the S-palmitoyl cysteine intermediate of the active site. A helical membrane pass occupies residues 184 to 204; that stretch reads FYLFTLSLSLLTIYIFAFDIV. Residues 205-224 are Lumenal-facing; the sequence is HVVLRSVDSGFVNTLKETPG. The chain crosses the membrane as a helical span at residues 225–245; sequence TVLEVLVCFFTLWSVVGLTGF. At 246-386 the chain is on the cytoplasmic side; it reads HTYLISLNQT…APAVIKESTH (141 aa). The segment covering 306–334 has biased composition (polar residues); that stretch reads SCSSAPSNGATTVPVNKSSNPATQTTKSS. Residues 306 to 386 are disordered; sequence SCSSAPSNGA…APAVIKESTH (81 aa).

This sequence belongs to the DHHC palmitoyltransferase family. ERF2/ZDHHC9 subfamily.

The protein resides in the endoplasmic reticulum membrane. It localises to the golgi apparatus membrane. The enzyme catalyses L-cysteinyl-[protein] + hexadecanoyl-CoA = S-hexadecanoyl-L-cysteinyl-[protein] + CoA. In terms of biological role, palmitoyltransferase that catalyzes the addition of palmitate onto various protein substrates, such as ADRB2, GSDMD, HRAS, NRAS and CGAS. In Danio rerio (Zebrafish), this protein is Palmitoyltransferase ZDHHC9.